The chain runs to 225 residues: Vacuolar protein sorting-associated protein 2 homolog 1 (225 aa).

A coiled-coil region spans residues 13–54; sequence AELLRENKRMLDKSIREIERERQGLQTQEKKLINEIKKTAKQ.

Belongs to the SNF7 family. In terms of assembly, component of the endosomal sorting required for transport complex III (ESCRT-III), composed at least of VPS2, VPS20, VPS24 and VPS32. Interacts with SKD1.

It localises to the endosome. In terms of biological role, component of the ESCRT-III complex, which is required for multivesicular bodies (MVBs) formation and sorting of endosomal cargo proteins into MVBs. The ESCRT-III complex is probably involved in the concentration of MVB cargo. The chain is Vacuolar protein sorting-associated protein 2 homolog 1 (VPS2.1) from Arabidopsis thaliana (Mouse-ear cress).